The primary structure comprises 58 residues: Large ribosomal subunit protein bL32 (58 aa).

It belongs to the bacterial ribosomal protein bL32 family.

The chain is Large ribosomal subunit protein bL32 from Caldicellulosiruptor bescii (strain ATCC BAA-1888 / DSM 6725 / KCTC 15123 / Z-1320) (Anaerocellum thermophilum).